Reading from the N-terminus, the 236-residue chain is Regulatory protein cys-3 (236 aa).

Residues 26–89 are disordered; the sequence is TLGQLQPIQP…MSVPPTPGAR (64 aa). Polar residues predominate over residues 28-37; sequence GQLQPIQPNP. In terms of domain architecture, bZIP spans 99-162; sequence LAAEEDKRKR…KWLKGLVTEK (64 aa). The segment at 105–137 is basic motif; sequence KRKRNTAASARFRIKKKQREQALEKSAKEMSEK. The leucine-zipper stretch occupies residues 141-155; the sequence is LEGRIQALETENKWL. The interval 189–236 is disordered; the sequence is AAAADKAEAAADKADAERAREESSFCVSTSSPSSDESVDTDNKKRRKD. Residues 193 to 211 show a composition bias toward basic and acidic residues; it reads DKAEAAADKADAERAREES. The segment covering 212-223 has biased composition (low complexity); that stretch reads SFCVSTSSPSSD.

This sequence belongs to the bZIP family. GCN4 subfamily. As to quaternary structure, binds DNA as a dimer.

The protein resides in the nucleus. In terms of biological role, turns on the expression of structural genes which encode sulfur-catabolic enzymes. Binds to sequence elements upstream of these genes. In Neurospora crassa (strain ATCC 24698 / 74-OR23-1A / CBS 708.71 / DSM 1257 / FGSC 987), this protein is Regulatory protein cys-3 (cys-3).